A 1000-amino-acid polypeptide reads, in one-letter code: DENN domain-containing protein 2A (1000 aa).

Disordered stretches follow at residues 1–155 (MLEA…LRFQ), 174–328 (DGSA…RKSY), 427–464 (KLLD…LGDL), and 491–525 (KRVK…LKAH). A compositionally biased stretch (polar residues) spans 34 to 43 (QLNSVPNSGP). Composition is skewed to basic and acidic residues over residues 56 to 70 (IKDK…KEPP), 79 to 117 (DGQE…DSRA), 140 to 155 (SQHR…LRFQ), and 221 to 237 (HLEV…DWKG). Composition is skewed to pro residues over residues 249–258 (PPKPFINPVP) and 288–307 (PPLP…PPPT). Over residues 427 to 436 (KLLDTRKLSR) the composition is skewed to basic and acidic residues. The segment covering 496-506 (LSQSTESNSGK) has biased composition (polar residues). Ser544 is modified (phosphoserine). One can recognise a uDENN domain in the interval 559–708 (EYFVVVSLHK…PFPALGKTII (150 aa)). Residues 730-863 (RLEHVDFESL…LQVALEHILE (134 aa)) form the cDENN domain. A dDENN domain is found at 865 to 960 (RNDLACDQDG…QERELRRQDA (96 aa)).

The protein resides in the cytoplasm. Its subcellular location is the cytoskeleton. In terms of biological role, guanine nucleotide exchange factor (GEF) which may activate RAB9A and RAB9B. Promotes the exchange of GDP to GTP, converting inactive GDP-bound Rab proteins into their active GTP-bound form. May play a role in late endosomes back to trans-Golgi network/TGN transport. The sequence is that of DENN domain-containing protein 2A (Dennd2a) from Mus musculus (Mouse).